Here is a 248-residue protein sequence, read N- to C-terminus: Myelin protein P0 (248 aa).

Positions 1-28 are cleaved as a signal peptide; the sequence is MAPGAPSSSPSPILAALLFSSLVLSPVQ. Topologically, residues 29–155 are extracellular; that stretch reads AIVVYTDKEV…VFEKVPTRYG (127 aa). The Ig-like V-type domain occupies 30–143; sequence IVVYTDKEVH…DIVGKTSQVT (114 aa). A disulfide bridge connects residues Cys-50 and Cys-127. Asn-122 carries N-linked (GlcNAc...) (complex) asparagine glycosylation. Residues 156 to 176 form a helical membrane-spanning segment; that stretch reads VVLGAVIGGVLGVVLLALLLF. Over 177-248 the chain is Cytoplasmic; sequence YLIRYCWLRR…GLGESRKDKK (72 aa). Phosphoserine; by PKC is present on Ser-210. The segment at 224 to 248 is disordered; that stretch reads DHSRSTKAASEKKTKGLGESRKDKK. Phosphoserine occurs at positions 226 and 228. A phosphoserine; by PKC mark is found at Ser-233 and Ser-243.

It belongs to the myelin P0 protein family. In terms of assembly, homodimer and homotetramer. Post-translationally, N-glycosylated; contains sulfate-substituted glycan. Found only in peripheral nervous system Schwann cells.

It localises to the cell membrane. Functionally, is an adhesion molecule necessary for normal myelination in the peripheral nervous system. It mediates adhesion between adjacent myelin wraps and ultimately drives myelin compaction. The chain is Myelin protein P0 (MPZ) from Bos taurus (Bovine).